A 236-amino-acid polypeptide reads, in one-letter code: Phosphoribosylaminoimidazole-succinocarboxamide synthase (236 aa).

Belongs to the SAICAR synthetase family.

The enzyme catalyses 5-amino-1-(5-phospho-D-ribosyl)imidazole-4-carboxylate + L-aspartate + ATP = (2S)-2-[5-amino-1-(5-phospho-beta-D-ribosyl)imidazole-4-carboxamido]succinate + ADP + phosphate + 2 H(+). It functions in the pathway purine metabolism; IMP biosynthesis via de novo pathway; 5-amino-1-(5-phospho-D-ribosyl)imidazole-4-carboxamide from 5-amino-1-(5-phospho-D-ribosyl)imidazole-4-carboxylate: step 1/2. The sequence is that of Phosphoribosylaminoimidazole-succinocarboxamide synthase from Campylobacter curvus (strain 525.92).